We begin with the raw amino-acid sequence, 93 residues long: Small ribosomal subunit protein uS19 (93 aa).

It belongs to the universal ribosomal protein uS19 family.

Its function is as follows. Protein S19 forms a complex with S13 that binds strongly to the 16S ribosomal RNA. This Mycobacteroides abscessus (strain ATCC 19977 / DSM 44196 / CCUG 20993 / CIP 104536 / JCM 13569 / NCTC 13031 / TMC 1543 / L948) (Mycobacterium abscessus) protein is Small ribosomal subunit protein uS19.